Consider the following 654-residue polypeptide: NADPH-dependent diflavin oxidoreductase 1 (654 aa).

The region spanning 14–166 (ALVLYGSETG…TFIPWITDFR (153 aa)) is the Flavodoxin-like domain. Residues 20–25 (SETGNA), 75–78 (STTG), and 113–122 (LGDSSYPKFN) each bind FMN. One can recognise an FAD-binding FR-type domain in the interval 235-485 (PDALTATLVE…QLQRGGLSSS (251 aa)). Residues Arg-389, 419–422 (RQFS), and 458–461 (GVCT) each bind FAD. NADP(+) contacts are provided by residues Thr-500, 568–569 (SR), and 574–578 (KIYVQ). Trp-654 contributes to the FAD binding site.

Belongs to the NADPH-dependent diflavin oxidoreductase NDOR1 family. It in the N-terminal section; belongs to the flavodoxin family. This sequence in the C-terminal section; belongs to the flavoprotein pyridine nucleotide cytochrome reductase family. In terms of assembly, interacts with dre2; as part of the cytosolic iron-sulfur (Fe-S) protein assembly (CIA) machinery. The cofactor is FAD. FMN is required as a cofactor.

It is found in the cytoplasm. Its subcellular location is the mitochondrion. The catalysed reaction is 2 oxidized [2Fe-2S]-[protein] + NADPH = 2 reduced [2Fe-2S]-[protein] + NADP(+) + H(+). Its function is as follows. NADPH-dependent reductase which is a central component of the cytosolic iron-sulfur (Fe-S) protein assembly (CIA) machinery. Transfers electrons from NADPH via its FAD and FMN prosthetic groups to the [2Fe-2S] cluster of dre2, another key component of the CIA machinery. In turn, this reduced cluster provides electrons for assembly of cytosolic iron-sulfur cluster proteins. Positively controls H(2)O(2)-induced cell death. The chain is NADPH-dependent diflavin oxidoreductase 1 from Aspergillus fumigatus (strain ATCC MYA-4609 / CBS 101355 / FGSC A1100 / Af293) (Neosartorya fumigata).